Consider the following 612-residue polypeptide: Phosphoenolpyruvate carboxykinase [GTP] (612 aa).

Residues Arg-82 and 221 to 223 each bind substrate; that span reads YGG. Positions 230 and 250 each coordinate Mn(2+). Ser-272 lines the substrate pocket. Position 273–278 (273–278) interacts with GTP; it reads ACGKTN. Cys-274 is an active-site residue. Asp-297 contacts Mn(2+). Residue 388 to 390 participates in substrate binding; that stretch reads NSR. GTP is bound by residues Arg-390, Arg-421, and 516-519; that span reads FGEN.

Belongs to the phosphoenolpyruvate carboxykinase [GTP] family. In terms of assembly, monomer. Mn(2+) serves as cofactor.

It localises to the cytoplasm. The enzyme catalyses oxaloacetate + GTP = phosphoenolpyruvate + GDP + CO2. Its pathway is carbohydrate biosynthesis; gluconeogenesis. In terms of biological role, catalyzes the conversion of oxaloacetate (OAA) to phosphoenolpyruvate (PEP), the rate-limiting step in the metabolic pathway that produces glucose from lactate and other precursors derived from the citric acid cycle. The polypeptide is Phosphoenolpyruvate carboxykinase [GTP] (Corynebacterium efficiens (strain DSM 44549 / YS-314 / AJ 12310 / JCM 11189 / NBRC 100395)).